Consider the following 103-residue polypeptide: ATP synthase F(0) complex subunit g, mitochondrial (103 aa).

Position 2 is an N-acetylalanine (alanine 2). Lysine 11, lysine 24, lysine 35, and lysine 54 each carry N6-acetyllysine.

It belongs to the ATPase g subunit family. Component of the ATP synthase complex composed at least of ATP5F1A/subunit alpha, ATP5F1B/subunit beta, ATP5MC1/subunit c (homooctomer), MT-ATP6/subunit a, MT-ATP8/subunit 8, ATP5ME/subunit e, ATP5MF/subunit f, ATP5MG/subunit g, ATP5MK/subunit k, ATP5MJ/subunit j, ATP5F1C/subunit gamma, ATP5F1D/subunit delta, ATP5F1E/subunit epsilon, ATP5PF/subunit F6, ATP5PB/subunit b, ATP5PD/subunit d, ATP5PO/subunit OSCP. ATP synthase complex consists of a soluble F(1) head domain (subunits alpha(3) and beta(3)) - the catalytic core - and a membrane F(0) domain - the membrane proton channel (subunits c, a, 8, e, f, g, k and j). These two domains are linked by a central stalk (subunits gamma, delta, and epsilon) rotating inside the F1 region and a stationary peripheral stalk (subunits F6, b, d, and OSCP).

It localises to the mitochondrion. It is found in the mitochondrion inner membrane. In terms of biological role, subunit g, of the mitochondrial membrane ATP synthase complex (F(1)F(0) ATP synthase or Complex V) that produces ATP from ADP in the presence of a proton gradient across the membrane which is generated by electron transport complexes of the respiratory chain. ATP synthase complex consist of a soluble F(1) head domain - the catalytic core - and a membrane F(1) domain - the membrane proton channel. These two domains are linked by a central stalk rotating inside the F(1) region and a stationary peripheral stalk. During catalysis, ATP synthesis in the catalytic domain of F(1) is coupled via a rotary mechanism of the central stalk subunits to proton translocation. In vivo, can only synthesize ATP although its ATP hydrolase activity can be activated artificially in vitro. Part of the complex F(0) domain. This is ATP synthase F(0) complex subunit g, mitochondrial from Mus musculus (Mouse).